We begin with the raw amino-acid sequence, 292 residues long: ATP phosphoribosyltransferase (292 aa).

Belongs to the ATP phosphoribosyltransferase family. Long subfamily. Mg(2+) serves as cofactor.

Its subcellular location is the cytoplasm. The catalysed reaction is 1-(5-phospho-beta-D-ribosyl)-ATP + diphosphate = 5-phospho-alpha-D-ribose 1-diphosphate + ATP. Its pathway is amino-acid biosynthesis; L-histidine biosynthesis; L-histidine from 5-phospho-alpha-D-ribose 1-diphosphate: step 1/9. Feedback inhibited by histidine. Functionally, catalyzes the condensation of ATP and 5-phosphoribose 1-diphosphate to form N'-(5'-phosphoribosyl)-ATP (PR-ATP). Has a crucial role in the pathway because the rate of histidine biosynthesis seems to be controlled primarily by regulation of HisG enzymatic activity. This chain is ATP phosphoribosyltransferase, found in Gemmatimonas aurantiaca (strain DSM 14586 / JCM 11422 / NBRC 100505 / T-27).